The sequence spans 344 residues: Oxygen sensor histidine kinase NreB (344 aa).

Cys58, Cys61, Cys73, and Cys76 together coordinate [4Fe-4S] cluster. The Histidine kinase domain maps to 152–344 (RISRELHDSV…GTNVTLNIPI (193 aa)). His158 carries the phosphohistidine; by autocatalysis modification.

It depends on [4Fe-4S] cluster as a cofactor. Post-translationally, autophosphorylated.

The protein resides in the cytoplasm. The enzyme catalyses ATP + protein L-histidine = ADP + protein N-phospho-L-histidine.. Member of the two-component regulatory system NreB/NreC involved in the control of dissimilatory nitrate/nitrite reduction in response to oxygen. NreB functions as a direct oxygen sensor histidine kinase which is autophosphorylated, in the absence of oxygen, probably at the conserved histidine residue, and transfers its phosphate group probably to a conserved aspartate residue of NreC. NreB/NreC activates the expression of the nitrate (narGHJI) and nitrite (nir) reductase operons, as well as the putative nitrate transporter gene narT. This chain is Oxygen sensor histidine kinase NreB (nreB), found in Staphylococcus aureus (strain Mu3 / ATCC 700698).